The following is a 37-amino-acid chain: Small ribosomal subunit protein eS32 (37 aa).

It belongs to the eukaryotic ribosomal protein eS32 family. In terms of assembly, part of the small ribosomal subunit.

Its function is as follows. Interacts with N(4)-acetylcytidine (ac(4)C) 1459 of the small rRNA; the acetyl group of ac(4)C1459 briges the interaction with this protein. This Thermococcus kodakarensis (strain ATCC BAA-918 / JCM 12380 / KOD1) (Pyrococcus kodakaraensis (strain KOD1)) protein is Small ribosomal subunit protein eS32 (rpl41e).